The primary structure comprises 269 residues: Expansin-B1 (269 aa).

The N-terminal stretch at 1-24 is a signal peptide; the sequence is MGSLANNIMVVGAVLAALVAGGSC. An N-linked (GlcNAc...) asparagine glycan is attached at Asn-34. Residues 63 to 169 form the Expansin-like EG45 domain; sequence GGACGIKNVN…RRVRCKYPAG (107 aa). Intrachain disulfides connect Cys-66/Cys-94, Cys-97/Cys-164, and Cys-102/Cys-108. Positions 183-264 constitute an Expansin-like CBD domain; it reads NYLAVLVKYV…NWRPDAVYTS (82 aa).

The protein belongs to the expansin family. Expansin B subfamily. As to expression, expressed in anthers and pollen.

Its subcellular location is the secreted. It is found in the cell wall. The protein localises to the membrane. In terms of biological role, may aid fertilization by loosening the cell wall of the stigma and style, thereby facilitating penetration of the pollen tube. Acts selectively on grass cell walls, which are relatively poor in pectins and xyloglucans and rich in glucuronoarabinoxylans and (1-3),(1-4)-beta-D-glucans, when compared with cell walls of other angiosperms, including other monocots. This is Expansin-B1 (EXPB1) from Zea mays (Maize).